The following is a 211-amino-acid chain: Mitotic spindle assembly checkpoint protein MAD2B (211 aa).

In terms of domain architecture, HORMA spans 13 to 203; the sequence is QVVADVLSEF…SDILKMQLYV (191 aa). Residues 21–155 are mediates interaction with REV1 and REV3L and homodimerization; sequence EFLEVAVHLI…FTVLVHTREA (135 aa).

In terms of assembly, homooligomer. Heterodimer with REV3L. This dimer forms the minimal DNA polymerase zeta complex (Pol-zeta2), with REV3L bearing DNA polymerase catalytic activity, although its activity is very low in this context. Component of the tetrameric Pol-zeta complex (Pol-zeta4), which consists of REV3L, MAD2L2, POLD2 and POLD3; Pol-zeta4 is the fully active form of DNA polymerase zeta. Component of the shieldin complex, consisting of SHLD1, SHLD2, SHLD3 and MAD2L2/REV7. Within the complex, SHLD2 forms a scaffold which interacts with a SHLD3-MAD2L2 subcomplex via its N-terminus, and with SHLD1 via its C-terminus. Interacts with REV1. Interacts with ADAM9. Interacts with CHAMP1. Interacts with FZR1 (in complex with the anaphase promoting complex APC). May interact with CDC20. Interacts with RAN. Interacts with ELK1; the interaction is direct and recruits MAD2L2 to ELK1-specific promoters. May interact with the JNK kinases MAPK8 and/or MAPK9 to stimulate ELK1 phosphorylation and transcriptional activity upon DNA damage. Interacts with TCF7L2; prevents its binding to promoters and negatively modulates its transcriptional activity. Interacts with YY1AP1. Interacts with PRCC; the interaction is direct. Interacts with POGZ. Interacts with ASTE1.

The protein resides in the nucleus. Its subcellular location is the cytoplasm. It localises to the cytoskeleton. It is found in the spindle. Adapter protein able to interact with different proteins and involved in different biological processes. Mediates the interaction between the error-prone DNA polymerase zeta catalytic subunit REV3L and the inserter polymerase REV1, thereby mediating the second polymerase switching in translesion DNA synthesis. Translesion DNA synthesis releases the replication blockade of replicative polymerases, stalled in presence of DNA lesions. Component of the shieldin complex, which plays an important role in repair of DNA double-stranded breaks (DSBs). During G1 and S phase of the cell cycle, the complex functions downstream of TP53BP1 to promote non-homologous end joining (NHEJ) and suppress DNA end resection. Mediates various NHEJ-dependent processes including immunoglobulin class-switch recombination, and fusion of unprotected telomeres. May also regulate another aspect of cellular response to DNA damage through regulation of the JNK-mediated phosphorylation and activation of the transcriptional activator ELK1. Inhibits the FZR1- and probably CDC20-mediated activation of the anaphase promoting complex APC thereby regulating progression through the cell cycle. Regulates TCF7L2-mediated gene transcription and may play a role in epithelial-mesenchymal transdifferentiation. The sequence is that of Mitotic spindle assembly checkpoint protein MAD2B (Mad2l2) from Rattus norvegicus (Rat).